The sequence spans 294 residues: ATP synthase gamma chain (294 aa).

The protein belongs to the ATPase gamma chain family. As to quaternary structure, F-type ATPases have 2 components, CF(1) - the catalytic core - and CF(0) - the membrane proton channel. CF(1) has five subunits: alpha(3), beta(3), gamma(1), delta(1), epsilon(1). CF(0) has three main subunits: a, b and c.

The protein localises to the cell inner membrane. In terms of biological role, produces ATP from ADP in the presence of a proton gradient across the membrane. The gamma chain is believed to be important in regulating ATPase activity and the flow of protons through the CF(0) complex. The polypeptide is ATP synthase gamma chain (Rhizobium etli (strain CIAT 652)).